Here is a 276-residue protein sequence, read N- to C-terminus: NADPH-dependent 7-cyano-7-deazaguanine reductase (276 aa).

A substrate-binding site is contributed by 83–85 (IES). 85–86 (SK) contributes to the NADPH binding site. Catalysis depends on C184, which acts as the Thioimide intermediate. Residue D191 is the Proton donor of the active site. Residue 223 to 224 (HE) coordinates substrate. Residue 252–253 (RG) coordinates NADPH.

The protein belongs to the GTP cyclohydrolase I family. QueF type 2 subfamily. In terms of assembly, homodimer.

Its subcellular location is the cytoplasm. It carries out the reaction 7-aminomethyl-7-carbaguanine + 2 NADP(+) = 7-cyano-7-deazaguanine + 2 NADPH + 3 H(+). It participates in tRNA modification; tRNA-queuosine biosynthesis. In terms of biological role, catalyzes the NADPH-dependent reduction of 7-cyano-7-deazaguanine (preQ0) to 7-aminomethyl-7-deazaguanine (preQ1). The polypeptide is NADPH-dependent 7-cyano-7-deazaguanine reductase (Pseudomonas putida (strain ATCC 47054 / DSM 6125 / CFBP 8728 / NCIMB 11950 / KT2440)).